The chain runs to 560 residues: Trans-activating transcriptional regulatory protein (560 aa).

Disordered stretches follow at residues 1-25 (MPKN…LFNN) and 99-134 (TGAE…LVNK).

This sequence belongs to the nucleopolyhedrovirus IE-1 protein family.

Functionally, regulatory transcriptional protein, which trans-activates gene expression from early baculovirus promoters. Can also trans-activate its own promoter, suggesting that it is autoregulated during normal infection of insect cells. The sequence is that of Trans-activating transcriptional regulatory protein (IE1) from Orgyia pseudotsugata (Douglas-fir tussock moth).